The sequence spans 387 residues: Succinyl-diaminopimelate desuccinylase (387 aa).

Residue histidine 74 participates in Zn(2+) binding. The active site involves aspartate 76. Aspartate 107 lines the Zn(2+) pocket. The active-site Proton acceptor is the glutamate 142. Zn(2+) contacts are provided by glutamate 143, glutamate 171, and histidine 360.

It belongs to the peptidase M20A family. DapE subfamily. Homodimer. It depends on Zn(2+) as a cofactor. Co(2+) serves as cofactor.

The enzyme catalyses N-succinyl-(2S,6S)-2,6-diaminopimelate + H2O = (2S,6S)-2,6-diaminopimelate + succinate. Its pathway is amino-acid biosynthesis; L-lysine biosynthesis via DAP pathway; LL-2,6-diaminopimelate from (S)-tetrahydrodipicolinate (succinylase route): step 3/3. Catalyzes the hydrolysis of N-succinyl-L,L-diaminopimelic acid (SDAP), forming succinate and LL-2,6-diaminopimelate (DAP), an intermediate involved in the bacterial biosynthesis of lysine and meso-diaminopimelic acid, an essential component of bacterial cell walls. In Rhodopseudomonas palustris (strain TIE-1), this protein is Succinyl-diaminopimelate desuccinylase.